The sequence spans 331 residues: uncharacterized protein (331 aa).

2 disordered regions span residues 131 to 163 (ISHA…KKRS) and 190 to 209 (DEQK…VQSS). The span at 140-162 (RPKPTKPRASRKRAAIAQSKKKR) shows a compositional bias: basic residues. Polar residues predominate over residues 195–209 (RQSTSQPDKEIVQSS).

This is an uncharacterized protein from Caenorhabditis elegans.